Here is a 229-residue protein sequence, read N- to C-terminus: Vacuolar protein sorting-associated protein 24 homolog 1 (229 aa).

Positions 15–60 (KQLLRDWQRKLRQECRNIERQIRDIQKEERNVQKAIKEAAKRNDMV) form a coiled coil. The tract at residues 193–215 (VPAQKASTSREEEAVAEGVDDEE) is disordered. Over residues 206–215 (AVAEGVDDEE) the composition is skewed to acidic residues.

This sequence belongs to the SNF7 family. Component of the endosomal sorting required for transport complex III (ESCRT-III), composed at least of VPS2, VPS20, VPS24 and VPS32. Interacts with SKD1.

It is found in the endosome. In terms of biological role, component of the ESCRT-III complex, which is required for multivesicular bodies (MVBs) formation and sorting of endosomal cargo proteins into MVBs. The ESCRT-III complex is probably involved in the concentration of MVB cargo. The sequence is that of Vacuolar protein sorting-associated protein 24 homolog 1 (VPS24-1) from Arabidopsis thaliana (Mouse-ear cress).